The following is a 246-amino-acid chain: uncharacterized protein (246 aa).

Residues methionine 1–glutamate 30 form the signal peptide.

This is an uncharacterized protein from Bacillus subtilis (strain 168).